We begin with the raw amino-acid sequence, 431 residues long: Na(+)-translocating NADH-quinone reductase subunit F (431 aa).

Residues 10-30 (ISIASLVFCVIGLILSGVILI) traverse the membrane as a helical segment. One can recognise a 2Fe-2S ferredoxin-type domain in the interval 41 to 133 (CKLKINNDDS…DMNLEIEERY (93 aa)). [2Fe-2S] cluster-binding residues include Cys76, Cys82, Cys85, and Cys117. One can recognise an FAD-binding FR-type domain in the interval 136–286 (ASSWEGTVVS…SGPYGESFMK (151 aa)).

The protein belongs to the NqrF family. As to quaternary structure, composed of six subunits; NqrA, NqrB, NqrC, NqrD, NqrE and NqrF. It depends on [2Fe-2S] cluster as a cofactor. FAD serves as cofactor.

It localises to the cell inner membrane. It carries out the reaction a ubiquinone + n Na(+)(in) + NADH + H(+) = a ubiquinol + n Na(+)(out) + NAD(+). Its function is as follows. NQR complex catalyzes the reduction of ubiquinone-1 to ubiquinol by two successive reactions, coupled with the transport of Na(+) ions from the cytoplasm to the periplasm. The first step is catalyzed by NqrF, which accepts electrons from NADH and reduces ubiquinone-1 to ubisemiquinone by a one-electron transfer pathway. The polypeptide is Na(+)-translocating NADH-quinone reductase subunit F (Chlamydia felis (strain Fe/C-56) (Chlamydophila felis)).